An 809-amino-acid chain; its full sequence is Cell division control protein 48 homolog A (809 aa).

Position 2 is an N-acetylserine (serine 2). Serine 41 carries the phosphoserine modification. ADP contacts are provided by residues glycine 210, 248–256 (GPPGSGKTL), and histidine 387. 521-529 (GPPGCGKTL) is an ATP binding site. Residues 782-809 (AGSGATTGVADPFATSAAAAGDDDDLYN) are disordered. The span at 791 to 801 (ADPFATSAAAA) shows a compositional bias: low complexity.

Belongs to the AAA ATPase family. As to quaternary structure, homohexamer. Interacts with SERK1, GRF6, KAPP and SYP31, but not with KNOLLE. Component of the SERK1 signaling complex, composed of KAPP, CDC48A, GRF6 or GRF7, SERK1, SERK2, SERK3/BAK1 and BRI1. Interacts with PUX1, PUX2, PUX3, PUX4, PUX5, PUX7 and PUX11 via its N-terminus. Phosphorylated on at least one threonine residue and on Ser-41 by SERK1.

The protein localises to the nucleus. It is found in the cytoplasm. It localises to the cytoskeleton. The protein resides in the phragmoplast. Its subcellular location is the cell membrane. In terms of biological role, probably functions in cell division and growth processes. Interacts with certain SNAREs as part of specialized membrane fusion events where vesicles from the same organelle fuse (homotypic fusion). In Arabidopsis thaliana (Mouse-ear cress), this protein is Cell division control protein 48 homolog A (CDC48A).